Reading from the N-terminus, the 282-residue chain is Pantothenate synthetase (282 aa).

Residue 30-37 (MGALHAGH) participates in ATP binding. Catalysis depends on His37, which acts as the Proton donor. Residue Gln61 coordinates (R)-pantoate. Gln61 contacts beta-alanine. An ATP-binding site is contributed by 147 to 150 (GEKD). Position 153 (Gln153) interacts with (R)-pantoate. Residues Val177 and 185–188 (LSSR) contribute to the ATP site.

It belongs to the pantothenate synthetase family. As to quaternary structure, homodimer.

It localises to the cytoplasm. The catalysed reaction is (R)-pantoate + beta-alanine + ATP = (R)-pantothenate + AMP + diphosphate + H(+). Its pathway is cofactor biosynthesis; (R)-pantothenate biosynthesis; (R)-pantothenate from (R)-pantoate and beta-alanine: step 1/1. Functionally, catalyzes the condensation of pantoate with beta-alanine in an ATP-dependent reaction via a pantoyl-adenylate intermediate. The chain is Pantothenate synthetase from Phocaeicola vulgatus (strain ATCC 8482 / DSM 1447 / JCM 5826 / CCUG 4940 / NBRC 14291 / NCTC 11154) (Bacteroides vulgatus).